A 737-amino-acid chain; its full sequence is O-GlcNAcase BT_4395 (737 aa).

The signal sequence occupies residues 1–21 (MKNNKIYLLGACLLCAVTTFA). The catalytic domain stretch occupies residues 148–433 (VRYRGVVEGF…WKDAIRTILP (286 aa)). The region spanning 149 to 416 (RYRGVVEGFY…SVASYAWNPA (268 aa)) is the GH84 domain. A protein is bound by residues Gly156, Lys187, and Asp263. The active-site Proton donor is Asp264. A protein contacts are provided by residues Tyr303, 358–360 (WWN), Asp365, and Asn393.

It belongs to the glycosyl hydrolase 84 family. As to quaternary structure, homodimer.

It catalyses the reaction 3-O-(N-acetyl-beta-D-glucosaminyl)-L-seryl-[protein] + H2O = N-acetyl-D-glucosamine + L-seryl-[protein]. The enzyme catalyses 3-O-(N-acetyl-beta-D-glucosaminyl)-L-threonyl-[protein] + H2O = L-threonyl-[protein] + N-acetyl-D-glucosamine. Its activity is regulated as follows. Inhibited by 1,2-dideoxy-2'-methyl-alpha-D-glucopyranoso-[2,1-d]-delta 2'-thiazoline (NAG-thiazoline) and O-(2-acetamido-2-deoxy-D-glucopyranosylidene)amino-N-phenyl-carbamate (PUGNAc). Not inhibited by Streptozotocin. Can hydrolyze the glycosidic link of O-GlcNAcylated proteins. Can use p-nitrophenyl-beta-GlcNAc and 4-methylumbelliferone-GlcNAc as substrates (in vitro). The sequence is that of O-GlcNAcase BT_4395 from Bacteroides thetaiotaomicron (strain ATCC 29148 / DSM 2079 / JCM 5827 / CCUG 10774 / NCTC 10582 / VPI-5482 / E50).